Consider the following 188-residue polypeptide: MTETHTTGVRGDSGRETAELVASRVLDVPDFPKPGVMFKDLMPLFSDGDAFREVIDDIVRYHGRDSFDTVVGIEARGFVVAAAIAYAAGVGVVPVRKAGKLPRVAYSASYALEYGEATLEVHQDAFTAGHRVLVVDDVLATGGTAEATLDLVERAGGTVAGFTVLLELGFLGGRERLTPRPVHALLTV.

This sequence belongs to the purine/pyrimidine phosphoribosyltransferase family. In terms of assembly, homodimer.

It is found in the cytoplasm. The enzyme catalyses AMP + diphosphate = 5-phospho-alpha-D-ribose 1-diphosphate + adenine. It participates in purine metabolism; AMP biosynthesis via salvage pathway; AMP from adenine: step 1/1. Functionally, catalyzes a salvage reaction resulting in the formation of AMP, that is energically less costly than de novo synthesis. This chain is Adenine phosphoribosyltransferase, found in Salinispora tropica (strain ATCC BAA-916 / DSM 44818 / JCM 13857 / NBRC 105044 / CNB-440).